Consider the following 211-residue polypeptide: Thymidine kinase (211 aa).

Residues serine 9–serine 16 and aspartate 87–glutamine 90 each bind ATP. The Proton acceptor role is filled by glutamate 88. Residues cysteine 145, cysteine 147, cysteine 182, and histidine 185 each coordinate Zn(2+).

It belongs to the thymidine kinase family. In terms of assembly, homotetramer.

The protein localises to the cytoplasm. The catalysed reaction is thymidine + ATP = dTMP + ADP + H(+). The protein is Thymidine kinase of Rhodopirellula baltica (strain DSM 10527 / NCIMB 13988 / SH1).